The primary structure comprises 258 residues: Flap endonuclease Xni (258 aa).

Aspartate 109 is a binding site for Mg(2+). A 5'-3' exonuclease domain is found at 165–254 (VKPEQLPDYW…GFNLQDIRYL (90 aa)). The K(+) site is built by leucine 176, alanine 177, proline 185, isoleucine 187, and isoleucine 190. The tract at residues 189–194 (GIGPKA) is interaction with DNA.

The protein belongs to the Xni family. It depends on Mg(2+) as a cofactor. K(+) is required as a cofactor.

In terms of biological role, has flap endonuclease activity. During DNA replication, flap endonucleases cleave the 5'-overhanging flap structure that is generated by displacement synthesis when DNA polymerase encounters the 5'-end of a downstream Okazaki fragment. In Photobacterium profundum (strain SS9), this protein is Flap endonuclease Xni.